A 218-amino-acid polypeptide reads, in one-letter code: Ropporin-1-like protein (218 aa).

Residues 17-46 enclose the RIIa domain; it reads PELTDILKQFTKAAIRTQPADVLQWSAGYF.

Belongs to the ropporin family. As to quaternary structure, component of the axonemal radial spoke complex 1 (RS1), at least composed of spoke head proteins RSPH1, RSPH3, RSPH9 and the cilia-specific component RSPH4A or sperm-specific component RSPH6A, spoke stalk proteins RSPH14, DNAJB13, DYDC1, ROPN1L and NME5, and the anchor protein IQUB. May interact with AKAP3. Interacts with FSCB; the interaction increases upon spermatozoa capacitation conditions. Interacts with CFAP61. Sumoylated, sumoylation decreases upon spermatozoa capacitation conditions.

Its subcellular location is the cell projection. It localises to the cilium. The protein localises to the flagellum. In terms of biological role, functions as part of axonemal radial spoke complexes that play an important part in the motility of sperm and cilia. Important for male fertility. With ROPN1, involved in fibrous sheath integrity and sperm motility, plays a role in PKA-dependent signaling processes required for spermatozoa capacitation. The protein is Ropporin-1-like protein (ROPN1L) of Bos taurus (Bovine).